A 206-amino-acid chain; its full sequence is uncharacterized protein (206 aa).

Residues 81 to 132 (EEQQQQQHHVHGPGCSHGHHHDSHANDGHHDEHHDEHHDHVNPDDVEDEFPR) are disordered. The span at 82–96 (EQQQQQHHVHGPGCS) shows a compositional bias: low complexity. Residues 103 to 123 (SHANDGHHDEHHDEHHDHVNP) show a composition bias toward basic and acidic residues. The helical transmembrane segment at 150-166 (YLTALCLLPIIGSLFSI) threads the bilayer.

The protein localises to the membrane. This is an uncharacterized protein from Dictyostelium discoideum (Social amoeba).